The sequence spans 330 residues: Aspartate--ammonia ligase (330 aa).

Belongs to the class-II aminoacyl-tRNA synthetase family. AsnA subfamily.

It localises to the cytoplasm. It catalyses the reaction L-aspartate + NH4(+) + ATP = L-asparagine + AMP + diphosphate + H(+). Its pathway is amino-acid biosynthesis; L-asparagine biosynthesis; L-asparagine from L-aspartate (ammonia route): step 1/1. The polypeptide is Aspartate--ammonia ligase (Klebsiella pneumoniae (strain 342)).